The primary structure comprises 516 residues: Oxysterol-binding protein-like protein 1 (516 aa).

Disordered regions lie at residues 168–240 and 459–501; these read PLGK…SQKS and KQEI…EEGK. The segment covering 178 to 187 has biased composition (polar residues); that stretch reads SRTTSSQSVA. Ser182 carries the phosphoserine modification. The span at 197-206 shows a compositional bias: basic residues; it reads TSKKKSSKKN. The span at 218 to 238 shows a compositional bias: polar residues; sequence DRSSTAPSTAESNNEHLSSSQ.

This sequence belongs to the OSBP family.

The protein resides in the endoplasmic reticulum. The chain is Oxysterol-binding protein-like protein 1 (obp1) from Schizosaccharomyces pombe (strain 972 / ATCC 24843) (Fission yeast).